We begin with the raw amino-acid sequence, 106 residues long: METLDYRFDGTTHAHFPTNAVLVGVLASGNLEILLEPAALDGAMTVRIITAAQGFGSVWQAVITDFARRHPLRDVRISINDAGATPAVVSLRLDQAVETLLGGGTP.

At Ser28 the chain carries O-(phosphoribosyl dephospho-coenzyme A)serine.

It belongs to the MdcC family. Post-translationally, covalently binds the prosthetic group of malonate decarboxylase.

It localises to the cytoplasm. In terms of biological role, subunit of malonate decarboxylase, it is an acyl carrier protein to which acetyl and malonyl thioester residues are bound via a 2'-(5''-phosphoribosyl)-3'-dephospho-CoA prosthetic group and turn over during the catalytic mechanism. The chain is Malonate decarboxylase acyl carrier protein from Stenotrophomonas maltophilia (strain R551-3).